The primary structure comprises 123 residues: Putative hypoxanthine phosphoribosyltransferase (123 aa).

May play a role in purine salvage. The protein is Putative hypoxanthine phosphoribosyltransferase of Methanosarcina mazei (strain ATCC BAA-159 / DSM 3647 / Goe1 / Go1 / JCM 11833 / OCM 88) (Methanosarcina frisia).